Consider the following 373-residue polypeptide: GDSL esterase/lipase LIP-4 (373 aa).

The first 32 residues, 1–32 (MATLFLYSNTFSFFFITLVSLALLILRQPSRA), serve as a signal peptide directing secretion. Serine 47 serves as the catalytic Nucleophile. Asparagine 93 carries an N-linked (GlcNAc...) asparagine glycan. Active-site residues include aspartate 339 and histidine 342.

It belongs to the 'GDSL' lipolytic enzyme family.

It is found in the secreted. The chain is GDSL esterase/lipase LIP-4 (LIP4) from Arabidopsis thaliana (Mouse-ear cress).